A 75-amino-acid polypeptide reads, in one-letter code: Carwaprin-b (75 aa).

Positions 1–24 (MSSGGLLLLLGLLTLWAELTPVSS) are cleaved as a signal peptide. The region spanning 27 to 72 (RPKKPGLCPPRPQKPPCVRECKNDWRCPGEQKCCRYGCIYECRDPI) is the WAP domain. Intrachain disulfides connect cysteine 34–cysteine 60, cysteine 43–cysteine 64, cysteine 47–cysteine 59, and cysteine 53–cysteine 68.

The protein belongs to the venom waprin family. In terms of tissue distribution, expressed by the venom gland.

The protein localises to the secreted. In terms of biological role, damages membranes of susceptible bacteria. Has no hemolytic activity. Not toxic to mice. Does not inhibit the proteinases elastase and cathepsin G. This is Carwaprin-b from Tropidechis carinatus (Australian rough-scaled snake).